The primary structure comprises 804 residues: Probable cadmium-transporting ATPase (804 aa).

2 HMA domains span residues 11–74 and 89–152; these read DKQV…LKVA and DKNV…LKVI. The Cd(2+) site is built by Cys-22, Cys-25, Cys-100, and Cys-103. The next 5 membrane-spanning stretches (helical) occupy residues 183–203, 207–227, 248–268, 413–433, and 441–461; these read STLL…FVNG, LVTS…LFKV, IGAA…LFAI, IIMV…GGSW, and LAVL…ISIV. Asp-492 (4-aspartylphosphate intermediate) is an active-site residue. A run of 2 helical transmembrane segments spans residues 749 to 771 and 776 to 798; these read LNII…LLVI and TLWI…SLRL.

This sequence belongs to the cation transport ATPase (P-type) (TC 3.A.3) family. Type IB subfamily.

The protein resides in the cell membrane. The catalysed reaction is Cd(2+)(in) + ATP + H2O = Cd(2+)(out) + ADP + phosphate + H(+). Its function is as follows. Couples the hydrolysis of ATP with the export of cadmium. Involved in cadmium resistance. The protein is Probable cadmium-transporting ATPase (cadA) of Staphylococcus aureus.